The chain runs to 175 residues: Shikimate kinase (175 aa).

Residue 17–22 participates in ATP binding; that stretch reads GAGKST. Mg(2+) is bound at residue serine 21. Substrate is bound by residues aspartate 39, arginine 63, and glycine 85. Residue arginine 123 participates in ATP binding. Position 142 (arginine 142) interacts with substrate. Residue glutamine 159 coordinates ATP.

It belongs to the shikimate kinase family. Monomer. Mg(2+) is required as a cofactor.

It localises to the cytoplasm. It catalyses the reaction shikimate + ATP = 3-phosphoshikimate + ADP + H(+). Its pathway is metabolic intermediate biosynthesis; chorismate biosynthesis; chorismate from D-erythrose 4-phosphate and phosphoenolpyruvate: step 5/7. Functionally, catalyzes the specific phosphorylation of the 3-hydroxyl group of shikimic acid using ATP as a cosubstrate. This is Shikimate kinase from Photobacterium profundum (strain SS9).